The sequence spans 249 residues: Proteasome subunit alpha type-7-1 (249 aa).

Ser-177 carries the post-translational modification Phosphoserine.

The protein belongs to the peptidase T1A family. In terms of assembly, the 26S proteasome consists of a 20S proteasome core and two 19S regulatory subunits. The 20S proteasome core is composed of 28 subunits that are arranged in four stacked rings, resulting in a barrel-shaped structure. The two end rings are each formed by seven alpha subunits, and the two central rings are each formed by seven beta subunits. The catalytic chamber with the active sites is on the inside of the barrel. Interacts with PI31; this interaction is reduced by PI31 ADP-ribosylation.

Its subcellular location is the cytoplasm. It localises to the nucleus. The proteasome is a multicatalytic proteinase complex which is characterized by its ability to cleave peptides with Arg, Phe, Tyr, Leu, and Glu adjacent to the leaving group at neutral or slightly basic pH. The proteasome has an ATP-dependent proteolytic activity. This Drosophila melanogaster (Fruit fly) protein is Proteasome subunit alpha type-7-1 (Prosalpha4).